The following is a 597-amino-acid chain: Indole-3-acetic acid-amido synthetase GH3.4 (597 aa).

The protein belongs to the IAA-amido conjugating enzyme family.

Functionally, catalyzes the synthesis of indole-3-acetic acid (IAA)-amino acid conjugates, providing a mechanism for the plant to cope with the presence of excess auxin. Strongly reactive with Glu, Gln, Trp, Asp, Ala, Leu, Phe, Gly, Tyr, Met, Ile and Val. Little or no product formation with His, Ser, Thr, Arg, Lys, or Cys. Also active on pyruvic and butyric acid analogs of IAA, PAA and the synthetic auxin naphthaleneacetic acid (NAA). The two chlorinated synthetic auxin herbicides 2,4-D and 3,6-dichloro-o-anisic acid (dicamba) cannot be used as substrates. The protein is Indole-3-acetic acid-amido synthetase GH3.4 (GH3.4) of Arabidopsis thaliana (Mouse-ear cress).